The primary structure comprises 321 residues: 5,10-methylenetetrahydromethanopterin reductase (321 aa).

This sequence belongs to the mer family. Homotetramer.

It localises to the cytoplasm. The catalysed reaction is 5-methyl-5,6,7,8-tetrahydromethanopterin + oxidized coenzyme F420-(gamma-L-Glu)(n) + H(+) = 5,10-methylenetetrahydromethanopterin + reduced coenzyme F420-(gamma-L-Glu)(n). It functions in the pathway one-carbon metabolism; methanogenesis from CO(2); methyl-coenzyme M from 5,10-methylene-5,6,7,8-tetrahydromethanopterin: step 1/2. Catalyzes the reversible reduction of methylene-H(4)MPT to methyl-H(4)MPT. The polypeptide is 5,10-methylenetetrahydromethanopterin reductase (Methanothermobacter marburgensis (strain ATCC BAA-927 / DSM 2133 / JCM 14651 / NBRC 100331 / OCM 82 / Marburg) (Methanobacterium thermoautotrophicum)).